A 305-amino-acid chain; its full sequence is MDGIIPLYKERGMTSNDCVFKVRRILHMKKVGHSGTLDPNVDGVLPICIGQATKVVDQLVHSGKVYTGEITLGLSTTTEDLDGEVVEEQQLTEPISTEKIKETLASFLGESIQIPPMFSAVKVNGRRLYDYARAGDPVERPQRKITITQFDLQGEPEFDAKTGRQTFRFIAGCSKGTYIRTLAVDFGRKLGLPAVMSDLTRLKSGGIQIGSCVTLAQLAEAADNGQLADILIPLDHVFEENVKIALDDDQWAKILNGVFLTFPEQTEEILALTYEGHIKALYQVANAKQHLYRPYKMYLQNQGTH.

Asp-38 functions as the Nucleophile in the catalytic mechanism.

It belongs to the pseudouridine synthase TruB family. Type 1 subfamily.

It catalyses the reaction uridine(55) in tRNA = pseudouridine(55) in tRNA. In terms of biological role, responsible for synthesis of pseudouridine from uracil-55 in the psi GC loop of transfer RNAs. This Latilactobacillus sakei subsp. sakei (strain 23K) (Lactobacillus sakei subsp. sakei) protein is tRNA pseudouridine synthase B.